The following is a 265-amino-acid chain: Dehydrin COR47 (265 aa).

Positions 1–14 (MAEEYKNNVPEHET) are enriched in basic and acidic residues. The interval 1–265 (MAEEYKNNVP…EVKKEKESDD (265 aa)) is disordered. Ala2 bears the N-acetylalanine mark. The segment covering 16–28 (TVATEESPATTTE) has biased composition (polar residues). Basic and acidic residues predominate over residues 29–47 (VTDRGLFDFLGKKEEEVKP). Ser64 carries the phosphoserine modification. Basic and acidic residues predominate over residues 69–79 (AAEHEEVKENK). Phosphothreonine is present on Thr90. Composition is skewed to basic and acidic residues over residues 96-105 (NKPSVIEKLH) and 129-156 (IVEG…KTAE). Residues 133–153 (EEDKKGLVEKIKEKLPGHHDK) form repeat 1. The tract at residues 133 to 251 (EEDKKGLVEK…KEKLPGYHAK (119 aa)) is 3 X 21 AA repeats, Lys-rich. The span at 160-172 (PVSTTIPVPVSES) shows a compositional bias: low complexity. Basic and acidic residues-rich tracts occupy residues 173–204 (VVEH…KAED) and 227–265 (PVEH…ESDD). Repeat copies occupy residues 180–200 (EEEK…HHDE) and 231–251 (PEEK…YHAK).

This sequence belongs to the plant dehydrin family.

The protein is Dehydrin COR47 (COR47) of Arabidopsis thaliana (Mouse-ear cress).